The sequence spans 463 residues: Glutamate--tRNA ligase 2 (463 aa).

The short motif at 11-21 (PSPTGYLHIGG) is the 'HIGH' region element. A 'KMSKS' region motif is present at residues 240 to 244 (KLSKR). K243 serves as a coordination point for ATP.

It belongs to the class-I aminoacyl-tRNA synthetase family. Glutamate--tRNA ligase type 1 subfamily. Monomer.

Its subcellular location is the cytoplasm. It carries out the reaction tRNA(Glu) + L-glutamate + ATP = L-glutamyl-tRNA(Glu) + AMP + diphosphate. Functionally, catalyzes the attachment of glutamate to tRNA(Glu) in a two-step reaction: glutamate is first activated by ATP to form Glu-AMP and then transferred to the acceptor end of tRNA(Glu). This is Glutamate--tRNA ligase 2 from Campylobacter jejuni subsp. jejuni serotype O:2 (strain ATCC 700819 / NCTC 11168).